A 90-amino-acid chain; its full sequence is Small ribosomal subunit protein bS16 (90 aa).

Belongs to the bacterial ribosomal protein bS16 family.

This Streptococcus pneumoniae serotype 19F (strain G54) protein is Small ribosomal subunit protein bS16.